A 960-amino-acid chain; its full sequence is UvrABC system protein A (960 aa).

35-42 (GLSGSGKS) is an ATP binding site. Residues 270 to 297 (CAHCNVSVPELQPRLFSFNAPFGACPSC) form a C4-type zinc finger. 2 consecutive ABC transporter domains span residues 327-605 (FKPE…QASL) and 625-953 (GNGN…WYIK). 657 to 664 (GVSGSGKS) provides a ligand contact to ATP. The C4-type zinc-finger motif lies at 756 to 782 (CEHCKGDGVITIEMNFLPDVYITCDVC).

The protein belongs to the ABC transporter superfamily. UvrA family. Forms a heterotetramer with UvrB during the search for lesions.

Its subcellular location is the cytoplasm. The UvrABC repair system catalyzes the recognition and processing of DNA lesions. UvrA is an ATPase and a DNA-binding protein. A damage recognition complex composed of 2 UvrA and 2 UvrB subunits scans DNA for abnormalities. When the presence of a lesion has been verified by UvrB, the UvrA molecules dissociate. This is UvrABC system protein A from Treponema pallidum (strain Nichols).